We begin with the raw amino-acid sequence, 203 residues long: Small ribosomal subunit protein uS2 (203 aa).

This sequence belongs to the universal ribosomal protein uS2 family.

The protein is Small ribosomal subunit protein uS2 of Methanoregula boonei (strain DSM 21154 / JCM 14090 / 6A8).